A 415-amino-acid polypeptide reads, in one-letter code: D-galactonate dehydratase family member RspA (415 aa).

Positions 48 and 133 each coordinate substrate. Tyrosine 170 functions as the Proton donor/acceptor in the catalytic mechanism. Aspartate 223 is a Mg(2+) binding site. Histidine 225 (proton donor/acceptor) is an active-site residue. Glutamate 249 and glutamate 275 together coordinate Mg(2+). Residues glutamate 275, arginine 296, histidine 325, aspartate 329, and glutamate 352 each coordinate substrate.

Belongs to the mandelate racemase/muconate lactonizing enzyme family. GalD subfamily. Mg(2+) serves as cofactor.

It catalyses the reaction D-mannonate = 2-dehydro-3-deoxy-D-gluconate + H2O. In terms of biological role, has low D-mannonate dehydratase activity (in vitro), suggesting that this is not a physiological substrate and that it has no significant role in D-mannonate degradation in vivo. Has no detectable activity with a panel of 70 other acid sugars (in vitro). This chain is D-galactonate dehydratase family member RspA (rspA), found in Escherichia coli (strain MS 21-1).